The primary structure comprises 551 residues: MRAKKQLLAALQDIVKDMGLAWPEKATIDTPKATGFGDLAANIALVLAKQAGQNPRELATRIADALRNRDADITAIDIAGPGFLNVTYSQDFWRETILRAQEAGSAFGSSDTGAGRKVQVEYVSANPTGPLHIGHGRGAAVGDSLARIMRFAGYDVSTEYYINDAGRQMRLLGLSVWVRAKELAGRPVTLPEDFYRGDYIKDIARELMEKEPGLLDLDDAAGEDRCFAYAMSSILDGIKQDLADFRVEHQVWFSERSLVEGGAVEKTFNRLKEAGLAFEQDGALWFRTTDFGDDKDRVLRKSDGTLTYFSSDIAYHDNKYDRGFDLVVDIWGADHHGYIPRMRAAVAALGRKPEAFDVVLIQLVNLLRGGELVAMSTRAGQFETLADVVKETGADAARFMFLSRKSDSPLDFDLELVKQRTMDNPVYYVQYAHARVCSVLRKAAERGIEMPAQLDGASLAPLSGDDEMELLRLLDRFEETVAGAATALAPHHISHYLMEVAGALHSYYARQPILNATEQDVIVPRLALLRAVGCVLANGLSLLGVSAPESM.

The 'HIGH' region signature appears at 125–135; it reads ANPTGPLHIGH.

Belongs to the class-I aminoacyl-tRNA synthetase family. Monomer.

The protein resides in the cytoplasm. It catalyses the reaction tRNA(Arg) + L-arginine + ATP = L-arginyl-tRNA(Arg) + AMP + diphosphate. The sequence is that of Arginine--tRNA ligase from Nitratidesulfovibrio vulgaris (strain ATCC 29579 / DSM 644 / CCUG 34227 / NCIMB 8303 / VKM B-1760 / Hildenborough) (Desulfovibrio vulgaris).